We begin with the raw amino-acid sequence, 95 residues long: Aspartyl/glutamyl-tRNA(Asn/Gln) amidotransferase subunit C (95 aa).

The protein belongs to the GatC family. In terms of assembly, heterotrimer of A, B and C subunits.

The catalysed reaction is L-glutamyl-tRNA(Gln) + L-glutamine + ATP + H2O = L-glutaminyl-tRNA(Gln) + L-glutamate + ADP + phosphate + H(+). The enzyme catalyses L-aspartyl-tRNA(Asn) + L-glutamine + ATP + H2O = L-asparaginyl-tRNA(Asn) + L-glutamate + ADP + phosphate + 2 H(+). Functionally, allows the formation of correctly charged Asn-tRNA(Asn) or Gln-tRNA(Gln) through the transamidation of misacylated Asp-tRNA(Asn) or Glu-tRNA(Gln) in organisms which lack either or both of asparaginyl-tRNA or glutaminyl-tRNA synthetases. The reaction takes place in the presence of glutamine and ATP through an activated phospho-Asp-tRNA(Asn) or phospho-Glu-tRNA(Gln). This Rhizorhabdus wittichii (strain DSM 6014 / CCUG 31198 / JCM 15750 / NBRC 105917 / EY 4224 / RW1) (Sphingomonas wittichii) protein is Aspartyl/glutamyl-tRNA(Asn/Gln) amidotransferase subunit C.